Consider the following 924-residue polypeptide: Protein translocase subunit SecA (924 aa).

ATP contacts are provided by residues Gln-87, 105 to 109 (GEGKT), and Asp-517. Residues 886–906 (VPAADRDPNDPSTWGKVGRNE) form a disordered region. The Zn(2+) site is built by Cys-908, Cys-910, Cys-919, and His-920.

It belongs to the SecA family. As to quaternary structure, monomer and homodimer. Part of the essential Sec protein translocation apparatus which comprises SecA, SecYEG and auxiliary proteins SecDF-YajC and YidC. The cofactor is Zn(2+).

The protein localises to the cell inner membrane. It is found in the cytoplasm. It catalyses the reaction ATP + H2O + cellular proteinSide 1 = ADP + phosphate + cellular proteinSide 2.. Its function is as follows. Part of the Sec protein translocase complex. Interacts with the SecYEG preprotein conducting channel. Has a central role in coupling the hydrolysis of ATP to the transfer of proteins into and across the cell membrane, serving both as a receptor for the preprotein-SecB complex and as an ATP-driven molecular motor driving the stepwise translocation of polypeptide chains across the membrane. This chain is Protein translocase subunit SecA, found in Azorhizobium caulinodans (strain ATCC 43989 / DSM 5975 / JCM 20966 / LMG 6465 / NBRC 14845 / NCIMB 13405 / ORS 571).